Reading from the N-terminus, the 212-residue chain is Tetraspanin-31-A (212 aa).

Topologically, residues 1–12 are cytoplasmic; it reads MVCGGFTCSKNA. A helical membrane pass occupies residues 13-33; sequence LCALNVVYMLVGLLLIGVAAW. Over 34–44 the chain is Extracellular; it reads GKGFGIVSSIH. Residues 45 to 65 form a helical membrane-spanning segment; the sequence is IIGGVIAIGVFLLLIAIIGLI. At 66–72 the chain is on the cytoplasmic side; sequence GAVSHHQ. A helical transmembrane segment spans residues 73-93; sequence VMLFIYMVVLILVFIFQFIVS. Topologically, residues 94–175 are extracellular; that stretch reads CSCLAMNRSQ…MLNHADEALK (82 aa). N-linked (GlcNAc...) asparagine glycosylation is found at Asn-100, Asn-109, Asn-117, and Asn-134. The chain crosses the membrane as a helical span at residues 176 to 196; the sequence is ILGGVGLFFSFTEILGVWLAF. The Cytoplasmic portion of the chain corresponds to 197–212; sequence RFRNQKDPRANPSAFL.

It belongs to the tetraspanin (TM4SF) family.

The protein localises to the membrane. In Xenopus laevis (African clawed frog), this protein is Tetraspanin-31-A (tspan31-a).